The sequence spans 365 residues: 4-hydroxy-3-methylbut-2-en-1-yl diphosphate synthase (flavodoxin) (365 aa).

[4Fe-4S] cluster is bound by residues cysteine 270, cysteine 273, cysteine 305, and glutamate 312.

It belongs to the IspG family. It depends on [4Fe-4S] cluster as a cofactor.

The enzyme catalyses (2E)-4-hydroxy-3-methylbut-2-enyl diphosphate + 2 oxidized [2Fe-2S]-[ferredoxin] + H2O = 2-C-methyl-D-erythritol 2,4-cyclic diphosphate + 2 reduced [2Fe-2S]-[ferredoxin] + H(+). The catalysed reaction is (2E)-4-hydroxy-3-methylbut-2-enyl diphosphate + oxidized [flavodoxin] + H2O + 2 H(+) = 2-C-methyl-D-erythritol 2,4-cyclic diphosphate + reduced [flavodoxin]. It functions in the pathway isoprenoid biosynthesis; isopentenyl diphosphate biosynthesis via DXP pathway; isopentenyl diphosphate from 1-deoxy-D-xylulose 5-phosphate: step 5/6. Functionally, converts 2C-methyl-D-erythritol 2,4-cyclodiphosphate (ME-2,4cPP) into 1-hydroxy-2-methyl-2-(E)-butenyl 4-diphosphate. Involved in density-dependent regulation of 2'-N-acetyltransferase. This chain is 4-hydroxy-3-methylbut-2-en-1-yl diphosphate synthase (flavodoxin), found in Providencia stuartii.